The following is an 843-amino-acid chain: Structure-specific endonuclease subunit SLX4 (843 aa).

Disordered regions lie at residues S26 to T111, A281 to K313, N339 to P377, S603 to L655, and A729 to E748. Polar residues-rich tracts occupy residues A50–N69 and P285–Q301. The segment covering Q302–K311 has biased composition (basic residues). 2 stretches are compositionally biased toward polar residues: residues N349–N372 and S603–T616. Residues D617–P636 are compositionally biased toward basic and acidic residues. The segment covering R739–E748 has biased composition (low complexity).

This sequence belongs to the SLX4 family. In terms of assembly, forms a heterodimer with SLX1. Phosphorylated in response to DNA damage.

Its subcellular location is the nucleus. In terms of biological role, regulatory subunit of the SLX1-SLX4 structure-specific endonuclease that resolves DNA secondary structures generated during DNA repair and recombination. Has endonuclease activity towards branched DNA substrates, introducing single-strand cuts in duplex DNA close to junctions with ss-DNA. This chain is Structure-specific endonuclease subunit SLX4, found in Ajellomyces capsulatus (strain G186AR / H82 / ATCC MYA-2454 / RMSCC 2432) (Darling's disease fungus).